The chain runs to 346 residues: NADPH dehydrogenase (346 aa).

23–26 (SPMC) contacts FMN. Substrate is bound at residue Tyr28. Positions 60 and 102 each coordinate FMN. Position 164-167 (164-167 (HGAH)) interacts with substrate. FMN-binding positions include Arg215 and 307–308 (GR).

This sequence belongs to the NADH:flavin oxidoreductase/NADH oxidase family. NamA subfamily. Homotetramer. FMN serves as cofactor.

It catalyses the reaction A + NADPH + H(+) = AH2 + NADP(+). Functionally, catalyzes the reduction of the double bond of an array of alpha,beta-unsaturated aldehydes and ketones. It also reduces the nitro group of nitroester and nitroaromatic compounds. It could have a role in detoxification processes. This is NADPH dehydrogenase from Bacillus cytotoxicus (strain DSM 22905 / CIP 110041 / 391-98 / NVH 391-98).